The following is a 113-amino-acid chain: U11-theraphotoxin-Hhn1m (113 aa).

An N-terminal signal peptide occupies residues 1-21 (MNTVRGTFLLVFGLAASLGQA). Positions 22 to 74 (DKNENRREMQKKTEQGKSYLNFAENLLLQKLEELEAKLLEKHSKKSKNSRQKR) are excised as a propeptide. 3 disulfides stabilise this stretch: Cys75-Cys90, Cys82-Cys95, and Cys89-Cys110.

The protein belongs to the neurotoxin 14 (magi-1) family. 01 (HNTX-16) subfamily. Expressed by the venom gland.

The protein localises to the secreted. Functionally, probable ion channel inhibitor. The protein is U11-theraphotoxin-Hhn1m of Cyriopagopus hainanus (Chinese bird spider).